The following is a 95-amino-acid chain: Protein TusB (95 aa).

The protein belongs to the DsrH/TusB family. As to quaternary structure, heterohexamer, formed by a dimer of trimers. The hexameric TusBCD complex contains 2 copies each of TusB, TusC and TusD. The TusBCD complex interacts with TusE.

It is found in the cytoplasm. Part of a sulfur-relay system required for 2-thiolation of 5-methylaminomethyl-2-thiouridine (mnm(5)s(2)U) at tRNA wobble positions. The protein is Protein TusB of Escherichia fergusonii (strain ATCC 35469 / DSM 13698 / CCUG 18766 / IAM 14443 / JCM 21226 / LMG 7866 / NBRC 102419 / NCTC 12128 / CDC 0568-73).